The following is a 258-amino-acid chain: Thiazole synthase (258 aa).

Lysine 98 (schiff-base intermediate with DXP) is an active-site residue. 1-deoxy-D-xylulose 5-phosphate contacts are provided by residues glycine 159, 185–186 (AG), and 207–208 (NT).

It belongs to the ThiG family. In terms of assembly, homotetramer. Forms heterodimers with either ThiH or ThiS.

It is found in the cytoplasm. It catalyses the reaction [ThiS sulfur-carrier protein]-C-terminal-Gly-aminoethanethioate + 2-iminoacetate + 1-deoxy-D-xylulose 5-phosphate = [ThiS sulfur-carrier protein]-C-terminal Gly-Gly + 2-[(2R,5Z)-2-carboxy-4-methylthiazol-5(2H)-ylidene]ethyl phosphate + 2 H2O + H(+). It participates in cofactor biosynthesis; thiamine diphosphate biosynthesis. In terms of biological role, catalyzes the rearrangement of 1-deoxy-D-xylulose 5-phosphate (DXP) to produce the thiazole phosphate moiety of thiamine. Sulfur is provided by the thiocarboxylate moiety of the carrier protein ThiS. In vitro, sulfur can be provided by H(2)S. The sequence is that of Thiazole synthase from Bacillus thuringiensis subsp. konkukian (strain 97-27).